Reading from the N-terminus, the 309-residue chain is Taste receptor type 2 member 124 (309 aa).

The Extracellular portion of the chain corresponds to 1 to 7; it reads MVSVLHS. A helical membrane pass occupies residues 8 to 28; that stretch reads ISTIIIIAEFVWGNLSNGLIV. Topologically, residues 29-46 are cytoplasmic; that stretch reads LKNCLDWINIKELSTLDQ. Residues 47–67 form a helical membrane-spanning segment; that stretch reads ILILLAISRISLIWETLLMWV. The Extracellular portion of the chain corresponds to 68–81; it reads KDKLISSITIEELK. The chain crosses the membrane as a helical span at residues 82–102; sequence MIMFSFMLSSHFSLWLATALS. Residues 103-127 are Cytoplasmic-facing; it reads TFYLFRIANCSWQIFLYLKWRLKHL. A helical transmembrane segment spans residues 128-148; the sequence is IVQMLLGSVMFLIANIIQITI. Over 149–182 the chain is Extracellular; sequence TLEKRFYQYKGNTSVNSIQNEFALLIEMMLFNMT. Asn160 and Asn180 each carry an N-linked (GlcNAc...) asparagine glycan. Residues 183 to 203 form a helical membrane-spanning segment; the sequence is IFSVIPFLLALISFFLLIFSL. At 204–227 the chain is on the cytoplasmic side; that stretch reads WKHLQRMQLNSREDRDPSTKAHRN. A helical transmembrane segment spans residues 228–248; it reads ALGIMVSFLLLYTMYVLSLLI. At 249–261 the chain is on the extracellular side; that stretch reads SWIAQKNQSELVH. An N-linked (GlcNAc...) asparagine glycan is attached at Asn255. A helical transmembrane segment spans residues 262-282; it reads IICMITSLLNPSVHSSILILG. The Cytoplasmic portion of the chain corresponds to 283-309; that stretch reads NFKLKQSSLCILRHLGCRLKSQNTPTT.

It belongs to the G-protein coupled receptor T2R family.

It is found in the membrane. Its function is as follows. Putative taste receptor which may play a role in the perception of bitterness. This Rattus norvegicus (Rat) protein is Taste receptor type 2 member 124.